Here is a 640-residue protein sequence, read N- to C-terminus: Pro-neuregulin-1, membrane-bound isoform (640 aa).

Positions 1–19 are excised as a propeptide; that stretch reads MSERKEGRGKGKGKKKERG. The disordered stretch occupies residues 1 to 53; the sequence is MSERKEGRGKGKGKKKERGSGKKPESAAGSQSPALPPRLKEMKSQESAAGSKL. Over 20 to 242 the chain is Extracellular; it reads SGKKPESAAG…EKAEELYQKR (223 aa). Positions 37 to 128 constitute an Ig-like C2-type domain; the sequence is PRLKEMKSQE…GNDSASANIT (92 aa). A disulfide bridge connects residues C57 and C112. Residues N120, N126, and N164 are each glycosylated (N-linked (GlcNAc...) asparagine). The EGF-like domain occupies 178–222; sequence HLVKCAEKEKTFCVNGGECFMVKDLSNPSRYLCKCQPGFTGARCT. 3 cysteine pairs are disulfide-bonded: C182–C196, C190–C210, and C212–C221. The chain crosses the membrane as a helical span at residues 243 to 265; the sequence is VLTITGICIALLVVGIMCVVAYC. The Cytoplasmic portion of the chain corresponds to 266–640; the sequence is KTKKQRKKLH…VIANQDPIAV (375 aa). Positions 334-350 are enriched in low complexity; it reads TSHYTSTAHHSTTVTQT. Disordered stretches follow at residues 334–360, 375–399, 433–461, and 524–588; these read TSHY…NGHT, SVEN…GGPR, RMSP…SMTV, and EYET…DTPF. A compositionally biased stretch (polar residues) spans 351–360; sequence PSHSWSNGHT. Residues 387–397 are compositionally biased toward gly residues; that stretch reads GPRGRLNGTGG. The span at 542-552 shows a compositional bias: basic residues; it reads ANSRRAKRTKP. The segment covering 563–574 has biased composition (low complexity); it reads DSNTSSQSSNSE.

Belongs to the neuregulin family. The cytoplasmic domain interacts with the LIM domain region of LIMK1. Forms a ternary complex with ERBB3 and ITGAV:ITGB3 or ITGA6:ITGB4. Interacts with NRDC and BACE1. Proteolytic cleavage close to the plasma membrane on the external face leads to the release of the soluble growth factor form. In terms of processing, N- and O-glycosylated. Extensive glycosylation precedes the proteolytic cleavage. In terms of tissue distribution, type I isoforms are the predominant forms expressed in the endocardium. Isoform alpha is expressed in breast, ovary, testis, prostate, heart, skeletal muscle, lung, placenta liver, kidney, salivary gland, small intestine and brain, but not in uterus, stomach, pancreas, and spleen. Isoform 3 is the predominant form in mesenchymal cells and in non-neuronal organs, whereas isoform 6 is the major neuronal form. Isoform 8 is expressed in spinal cord and brain. Isoform 9 is the major form in skeletal muscle cells; in the nervous system it is expressed in spinal cord and brain. Also detected in adult heart, placenta, lung, liver, kidney, and pancreas. Isoform 10 is expressed in nervous system: spinal cord motor neurons, dorsal root ganglion neurons, and brain. Predominant isoform expressed in sensory and motor neurons. Not detected in adult heart, placenta, lung, liver, skeletal muscle, kidney, and pancreas. Not expressed in fetal lung, liver and kidney. Type IV isoforms are brain-specific.

It localises to the cell membrane. It is found in the secreted. Its subcellular location is the nucleus. The protein localises to the membrane. In terms of biological role, direct ligand for ERBB3 and ERBB4 tyrosine kinase receptors. Concomitantly recruits ERBB1 and ERBB2 coreceptors, resulting in ligand-stimulated tyrosine phosphorylation and activation of the ERBB receptors. The multiple isoforms perform diverse functions such as inducing growth and differentiation of epithelial, glial, neuronal, and skeletal muscle cells; inducing expression of acetylcholine receptor in synaptic vesicles during the formation of the neuromuscular junction; stimulating lobuloalveolar budding and milk production in the mammary gland and inducing differentiation of mammary tumor cells; stimulating Schwann cell proliferation; implication in the development of the myocardium such as trabeculation of the developing heart. Isoform 10 may play a role in motor and sensory neuron development. Binds to ERBB4. Binds to ERBB3. Acts as a ligand for integrins and binds (via EGF domain) to integrins ITGAV:ITGB3 or ITGA6:ITGB4. Its binding to integrins and subsequent ternary complex formation with integrins and ERRB3 are essential for NRG1-ERBB signaling. Induces the phosphorylation and activation of MAPK3/ERK1, MAPK1/ERK2 and AKT1. Ligand-dependent ERBB4 endocytosis is essential for the NRG1-mediated activation of these kinases in neurons. The sequence is that of Pro-neuregulin-1, membrane-bound isoform (NRG1) from Homo sapiens (Human).